The chain runs to 390 residues: Serine/threonine/tyrosine-protein kinase HT1 (390 aa).

A Protein kinase domain is found at 86 to 359 (LFIGNKFASG…GLPLTSHASL (274 aa)). Residues 92-100 (FASGAHSRI) and K113 contribute to the ATP site. The active-site Proton acceptor is D212.

The protein belongs to the protein kinase superfamily. Ser/Thr protein kinase family. In terms of assembly, interacts with DTX56. Binds to MPK4 and MPK12. Associates to CBC1 and CBC2. Post-translationally, autophosphorylated. As to expression, mainly localizes in guard cells. Expressed at low level in leaves, stems, roots and flowers.

It is found in the cell membrane. It catalyses the reaction L-seryl-[protein] + ATP = O-phospho-L-seryl-[protein] + ADP + H(+). It carries out the reaction L-threonyl-[protein] + ATP = O-phospho-L-threonyl-[protein] + ADP + H(+). The enzyme catalyses L-tyrosyl-[protein] + ATP = O-phospho-L-tyrosyl-[protein] + ADP + H(+). Its activity is regulated as follows. Inhibited by MPK4 and MPK12. Functionally, serine/threonine/tyrosine kinase involved in the control of stomatal movement in response to CO(2). Functions as a major negative regulator of CO(2)-induced stomatal closing. Does not seem to be involved in stomatal closure in response to abscisic acid (ABA) or light. Involved in the control of red light-induced stomatal opening. Is epistatic to SRK2E/OST1 function during stomatal responses to red light and altered CO(2). Phosphorylates SRK2E/OST1 and GHR1 to prevents SRK2E/OST1- and GHR1-induced activation of SLAC1, thus preventing stomatal closure. Mediates the phosphorylation of CBC1 and CBC2. The sequence is that of Serine/threonine/tyrosine-protein kinase HT1 from Arabidopsis thaliana (Mouse-ear cress).